Here is a 157-residue protein sequence, read N- to C-terminus: Probable succinate transporter subunit YjjB (157 aa).

Helical transmembrane passes span 8–28 (LALM…AMVF), 55–75 (AGFN…SIGI), 87–107 (VFTV…TAMI), and 129–149 (FLKA…PGLW).

It belongs to the ThrE exporter (TC 2.A.79) family. As to quaternary structure, the transporter is composed of YjjB and YjjP.

The protein resides in the cell inner membrane. In terms of biological role, involved in succinate export with YjjP. Both proteins are required for export. This Salmonella agona (strain SL483) protein is Probable succinate transporter subunit YjjB.